The chain runs to 995 residues: UPF0182 protein MUL_2505 (995 aa).

The next 7 membrane-spanning stretches (helical) occupy residues 18-38, 63-83, 113-133, 175-195, 210-230, 259-279, and 287-307; these read VLIL…RLID, FLVF…GLAL, LFGI…AQSY, FVAI…FGGI, IQLV…YWLN, KLIL…AIVL, and IGLV…PMIV. The segment at 900 to 947 is disordered; it reads AATGIQPTEGGAPANVPPNNAPSPEALPGTPPSPPTAVPPAPEASVTL. Positions 928–941 are enriched in pro residues; it reads GTPPSPPTAVPPAP.

This sequence belongs to the UPF0182 family.

Its subcellular location is the cell membrane. The chain is UPF0182 protein MUL_2505 from Mycobacterium ulcerans (strain Agy99).